A 176-amino-acid chain; its full sequence is Cytochrome b (176 aa).

Helical transmembrane passes span 33-53, 77-98, and 113-133; these read FGSLLGVCLTMQIMTGLFLAM, WLLRYLHANGASMFFICLYLHI, and WNVGIILLFAVMATAFMGYVL. 2 residues coordinate heme b: His-83 and His-97.

This sequence belongs to the cytochrome b family. In terms of assembly, the cytochrome bc1 complex contains 11 subunits: 3 respiratory subunits (MT-CYB, CYC1 and UQCRFS1), 2 core proteins (UQCRC1 and UQCRC2) and 6 low-molecular weight proteins (UQCRH/QCR6, UQCRB/QCR7, UQCRQ/QCR8, UQCR10/QCR9, UQCR11/QCR10 and a cleavage product of UQCRFS1). This cytochrome bc1 complex then forms a dimer. It depends on heme b as a cofactor.

The protein resides in the mitochondrion inner membrane. Component of the ubiquinol-cytochrome c reductase complex (complex III or cytochrome b-c1 complex) that is part of the mitochondrial respiratory chain. The b-c1 complex mediates electron transfer from ubiquinol to cytochrome c. Contributes to the generation of a proton gradient across the mitochondrial membrane that is then used for ATP synthesis. The protein is Cytochrome b (MT-CYB) of Eumops perotis (Western bonneted bat).